A 162-amino-acid polypeptide reads, in one-letter code: MARVEL domain-containing protein 1 (162 aa).

The Cytoplasmic portion of the chain corresponds to Met-1 to Ser-17. The region spanning Phe-14–Cys-155 is the MARVEL domain. The chain crosses the membrane as a helical span at residues Phe-18–Ala-38. Topologically, residues Ala-39–His-47 are extracellular. The helical transmembrane segment at Phe-48–Leu-68 threads the bilayer. Over Leu-69–Ser-86 the chain is Cytoplasmic. Residues Asn-87–Tyr-107 traverse the membrane as a helical segment. Residues Lys-108 to Lys-127 lie on the Extracellular side of the membrane. A helical membrane pass occupies residues Val-128–Ile-148. Topologically, residues Tyr-149–Val-162 are cytoplasmic.

The protein localises to the membrane. The protein resides in the nucleus. The chain is MARVEL domain-containing protein 1 (marveld1) from Danio rerio (Zebrafish).